The following is a 434-amino-acid chain: Histidinol dehydrogenase (434 aa).

S242, Q264, and H267 together coordinate substrate. Zn(2+) contacts are provided by Q264 and H267. Active-site proton acceptor residues include E332 and H333. The substrate site is built by H333, D366, E420, and H425. D366 is a Zn(2+) binding site. Residue H425 coordinates Zn(2+).

The protein belongs to the histidinol dehydrogenase family. Zn(2+) is required as a cofactor.

The catalysed reaction is L-histidinol + 2 NAD(+) + H2O = L-histidine + 2 NADH + 3 H(+). The protein operates within amino-acid biosynthesis; L-histidine biosynthesis; L-histidine from 5-phospho-alpha-D-ribose 1-diphosphate: step 9/9. Catalyzes the sequential NAD-dependent oxidations of L-histidinol to L-histidinaldehyde and then to L-histidine. This Oleidesulfovibrio alaskensis (strain ATCC BAA-1058 / DSM 17464 / G20) (Desulfovibrio alaskensis) protein is Histidinol dehydrogenase.